The chain runs to 290 residues: Prepilin leader peptidase/N-methyltransferase (290 aa).

Residues 14-34 form a helical membrane-spanning segment; that stretch reads LYFSLVFLFSLMIGSFLNVVI. Cysteine 74, cysteine 77, cysteine 99, and cysteine 102 together coordinate Zn(2+). 6 helical membrane passes run 106–126, 130–150, 161–181, 185–205, 232–252, and 261–281; these read ISAR…AVAM, PGWG…LTFI, LTLP…FVSL, VIGA…FKLL, PIVL…LILL, and IPFG…GDSI.

Belongs to the peptidase A24 family. It depends on Zn(2+) as a cofactor.

The protein resides in the cell inner membrane. It carries out the reaction Typically cleaves a -Gly-|-Phe- bond to release an N-terminal, basic peptide of 5-8 residues from type IV prepilin, and then N-methylates the new N-terminal amino group, the methyl donor being S-adenosyl-L-methionine.. Its function is as follows. Plays an essential role in type IV pili and type II pseudopili formation by proteolytically removing the leader sequence from substrate proteins and subsequently monomethylating the alpha-amino group of the newly exposed N-terminal phenylalanine. This chain is Prepilin leader peptidase/N-methyltransferase (tapD), found in Aeromonas hydrophila.